The sequence spans 137 residues: Nucleoside diphosphate kinase (137 aa).

Residues lysine 9, phenylalanine 58, arginine 86, threonine 92, arginine 103, and asparagine 113 each contribute to the ATP site. The active-site Pros-phosphohistidine intermediate is histidine 121.

Belongs to the NDK family. In terms of assembly, homotetramer. Requires Mg(2+) as cofactor.

The protein resides in the cytoplasm. The enzyme catalyses a 2'-deoxyribonucleoside 5'-diphosphate + ATP = a 2'-deoxyribonucleoside 5'-triphosphate + ADP. It catalyses the reaction a ribonucleoside 5'-diphosphate + ATP = a ribonucleoside 5'-triphosphate + ADP. Its function is as follows. Major role in the synthesis of nucleoside triphosphates other than ATP. The ATP gamma phosphate is transferred to the NDP beta phosphate via a ping-pong mechanism, using a phosphorylated active-site intermediate. This Streptococcus pneumoniae (strain Hungary19A-6) protein is Nucleoside diphosphate kinase.